The chain runs to 837 residues: MTQVTVKELAQVVDTPVERLLQQMREAGLSHTSAEQVVTDNEKQALLAHLKSSHGAKVDEPRKITLQRKTTTKLKVGGSKTISVEVRKKKTFVKRSAEEIEAEQRRELEEQRAAEEAARLKAEQEARERAEEEARRQAEAAKAQTAETAAPAAAESASSAEPAQVVAAVEAAAPAPERKKEEPRRVEKPRSDDDERRDRKHAQHRPSLKTKAPLARTVRSGEDEADGFRRGGRGGKSKLKKRNQHGFQSPTGPVVREVSIGETITVAELAQQMSVKAAEVIKFMFKMGSPVTINQVLDQETAQLVAEELGHKVKLVSDNALEEQLAELLKFEGESVARAPVVTVMGHVDHGKTSLLDYIRRAKVAVGEAGGITQHIGAYHVETERGMVTFLDTPGHAAFTAMRARGAKATDIVILVVAADDGVMPQTQEAVQHAKAAGVPIVVAVNKIDKPEANPDNIKNGLAALDVIPEEWGGDTPFIPVSAKVGTGVDELLEAVLLQAEILELKATPSAPGRGVVVESRLDKGRGPVATVLVQDGTLRQGDMVLCGVNFGRVRAMLDENGKPVKEAGPAIPVEILGLDGTPEAGDDLTVVADEKKAREVALFRQGKFREVKLARAHAGKLENIFETMGQDEKKTLNIVLKADVRGSLEALQGSLNGLGNDEVQVRVVGGGVGGITESDANLALASNAVLFGFNVRADAGARKIVEAEGLDMRYYNVIYDIIEDVKKALTGMLGSDVRENILGIAEVRDVFRSPKFGAIAGCMVTEGMVHRNRPIRVLRDDVVIFEGELESLRRFKDDVAEVRAGMECGIGVKSYNDVKVGDKIEVFEKVEVARSL.

Residues 97 to 139 (AEEIEAEQRRELEEQRAAEEAARLKAEQEARERAEEEARRQAE) are compositionally biased toward basic and acidic residues. A disordered region spans residues 97 to 253 (AEEIEAEQRR…QHGFQSPTGP (157 aa)). Residues 140-175 (AAKAQTAETAAPAAAESASSAEPAQVVAAVEAAAPA) show a composition bias toward low complexity. Basic and acidic residues predominate over residues 176-197 (PERKKEEPRRVEKPRSDDDERR). Basic residues predominate over residues 198–208 (DRKHAQHRPSL). Residues 219–229 (RSGEDEADGFR) show a composition bias toward basic and acidic residues. Positions 230–244 (RGGRGGKSKLKKRNQ) are enriched in basic residues. In terms of domain architecture, tr-type G spans 337-504 (ARAPVVTVMG…AVLLQAEILE (168 aa)). The interval 346-353 (GHVDHGKT) is G1. GTP is bound at residue 346 to 353 (GHVDHGKT). Positions 371–375 (GITQH) are G2. The tract at residues 392–395 (DTPG) is G3. GTP-binding positions include 392-396 (DTPGH) and 446-449 (NKID). Residues 446-449 (NKID) are G4. Positions 482–484 (SAK) are G5.

Belongs to the TRAFAC class translation factor GTPase superfamily. Classic translation factor GTPase family. IF-2 subfamily.

The protein resides in the cytoplasm. One of the essential components for the initiation of protein synthesis. Protects formylmethionyl-tRNA from spontaneous hydrolysis and promotes its binding to the 30S ribosomal subunits. Also involved in the hydrolysis of GTP during the formation of the 70S ribosomal complex. This chain is Translation initiation factor IF-2, found in Stutzerimonas stutzeri (strain A1501) (Pseudomonas stutzeri).